The primary structure comprises 90 residues: Probable Fe(2+)-trafficking protein (90 aa).

Belongs to the Fe(2+)-trafficking protein family.

Functionally, could be a mediator in iron transactions between iron acquisition and iron-requiring processes, such as synthesis and/or repair of Fe-S clusters in biosynthetic enzymes. The chain is Probable Fe(2+)-trafficking protein from Marinobacter nauticus (strain ATCC 700491 / DSM 11845 / VT8) (Marinobacter aquaeolei).